The following is a 162-amino-acid chain: Interleukin-15 (162 aa).

The signal sequence occupies residues 1 to 29 (MRILKPYLRSTSIQCYLCLLLNSHFLTEA). Residues 30–48 (GIHVFILGCISAGLPKTEA) constitute a propeptide that is removed on maturation. 2 disulfide bridges follow: C83-C133 and C90-C136. 3 N-linked (GlcNAc...) asparagine glycosylation sites follow: N113, N121, and N127.

This sequence belongs to the IL-15/IL-21 family.

The protein localises to the secreted. In terms of biological role, cytokine that plays a major role in the development of inflammatory and protective immune responses to microbial invaders and parasites by modulating immune cells of both the innate and adaptive immune systems. Stimulates the proliferation of natural killer cells, T-cells and B-cells and promotes the secretion of several cytokines. In monocytes, induces the production of IL8 and monocyte chemotactic protein 1/CCL2, two chemokines that attract neutrophils and monocytes respectively to sites of infection. Unlike most cytokines, which are secreted in soluble form, IL15 is expressed in association with its high affinity IL15RA on the surface of IL15-producing cells and delivers signals to target cells that express IL2RB and IL2RG receptor subunits. Binding to its receptor triggers the phosphorylation of JAK1 and JAK3 and the recruitment and subsequent phosphorylation of signal transducer and activator of transcription-3/STAT3 and STAT5. In mast cells, induces the rapid tyrosine phosphorylation of STAT6 and thereby controls mast cell survival and release of cytokines such as IL4. The chain is Interleukin-15 (IL15) from Bubalus bubalis (Domestic water buffalo).